Consider the following 195-residue polypeptide: Dephospho-CoA kinase (195 aa).

Residues 4–195 (IIGLTGGIAS…EQILDALQRL (192 aa)) form the DPCK domain. 12 to 17 (ASGKST) contacts ATP.

Belongs to the CoaE family.

Its subcellular location is the cytoplasm. The catalysed reaction is 3'-dephospho-CoA + ATP = ADP + CoA + H(+). It functions in the pathway cofactor biosynthesis; coenzyme A biosynthesis; CoA from (R)-pantothenate: step 5/5. Its function is as follows. Catalyzes the phosphorylation of the 3'-hydroxyl group of dephosphocoenzyme A to form coenzyme A. The protein is Dephospho-CoA kinase of Streptococcus agalactiae serotype Ia (strain ATCC 27591 / A909 / CDC SS700).